The sequence spans 221 residues: GTP-binding nuclear protein Ran-1 (221 aa).

A Small GTPase Ran-type domain is found at 10–174; it reads DYPSFKLVIV…LYLARKLAGD (165 aa). Residue 21–28 participates in GTP binding; that stretch reads DGGTGKTT. The interval 40–48 is switch-I; sequence KKYEPTIGV. GTP contacts are provided by residues Gly-71, 125 to 128, and 153 to 155; these read NKVD and SAK. Residues 71-87 form a switch-II region; sequence GQEKFGGLRDGYYIHGQ.

Belongs to the small GTPase superfamily. Ran family. Found in a nuclear export complex with RanGTP, exportin and pre-miRNA.

The protein localises to the nucleus. GTP-binding protein involved in nucleocytoplasmic transport. Required for the import of protein into the nucleus and also for RNA export. Involved in chromatin condensation and control of cell cycle. This is GTP-binding nuclear protein Ran-1 (RAN1) from Oryza sativa subsp. indica (Rice).